The chain runs to 95 residues: MDKRHILMLLAVIIISVAPLIIYSGHGEDDGYFGGADDSAGDAITETGYKPWFQPLWEPPSGEIESLLFALQAAIGALIIGYVFGYYRGRGESSE.

2 consecutive transmembrane segments (helical) span residues 5-25 (HILM…IYSG) and 67-87 (LLFA…FGYY).

Belongs to the CbiN family. In terms of assembly, forms an energy-coupling factor (ECF) transporter complex composed of an ATP-binding protein (A component, CbiO), a transmembrane protein (T component, CbiQ) and 2 possible substrate-capture proteins (S components, CbiM and CbiN) of unknown stoichimetry.

It is found in the cell membrane. It functions in the pathway cofactor biosynthesis; adenosylcobalamin biosynthesis. In terms of biological role, part of the energy-coupling factor (ECF) transporter complex CbiMNOQ involved in cobalt import. This is Cobalt transport protein CbiN from Methanothermobacter thermautotrophicus (strain ATCC 29096 / DSM 1053 / JCM 10044 / NBRC 100330 / Delta H) (Methanobacterium thermoautotrophicum).